The sequence spans 233 residues: Purine nucleoside phosphorylase DeoD-type (233 aa).

An a purine D-ribonucleoside-binding site is contributed by His-4. Phosphate is bound by residues Gly-20, Arg-24, Arg-43, and 87-90; that span reads RIGT. A purine D-ribonucleoside contacts are provided by residues 179 to 181 and 203 to 204; these read EME and SD. Residue Asp-204 is the Proton donor of the active site.

Belongs to the PNP/UDP phosphorylase family. Homohexamer; trimer of homodimers.

The catalysed reaction is a purine D-ribonucleoside + phosphate = a purine nucleobase + alpha-D-ribose 1-phosphate. It carries out the reaction a purine 2'-deoxy-D-ribonucleoside + phosphate = a purine nucleobase + 2-deoxy-alpha-D-ribose 1-phosphate. In terms of biological role, catalyzes the reversible phosphorolytic breakdown of the N-glycosidic bond in the beta-(deoxy)ribonucleoside molecules, with the formation of the corresponding free purine bases and pentose-1-phosphate. In Helicobacter acinonychis (strain Sheeba), this protein is Purine nucleoside phosphorylase DeoD-type.